The chain runs to 107 residues: uncharacterized protein (107 aa).

A run of 4 helical transmembrane segments spans residues 9–28, 33–50, 55–72, and 77–99; these read FLVFISFFIILLGILDLIME, SYIIILVGLASLFASLNI, LAIAVCIAAAVFIEAIHV, and YRVILYAIGSLPLIISVGSYLKG.

The protein resides in the cell membrane. This is an uncharacterized protein from Archaeoglobus fulgidus (strain ATCC 49558 / DSM 4304 / JCM 9628 / NBRC 100126 / VC-16).